The primary structure comprises 1032 residues: Putative oxidoreductase YgfK (1032 aa).

Residues 928–958 (RFQTLHLDAYCNECGNCAQFCPWNGKPYKDK) enclose the 4Fe-4S ferredoxin-type domain. Positions 938, 941, 944, and 948 each coordinate [4Fe-4S] cluster.

[4Fe-4S] cluster is required as a cofactor.

Could be an iron-sulfur flavoprotein with NADPH:O(2) oxidoreductase activity. This is Putative oxidoreductase YgfK (ygfK) from Escherichia coli (strain K12).